The chain runs to 428 residues: 3-phosphoshikimate 1-carboxyvinyltransferase (428 aa).

Residues Lys-19, Ser-20, and Arg-24 each coordinate 3-phosphoshikimate. Lys-19 is a binding site for phosphoenolpyruvate. Gly-91 and Arg-119 together coordinate phosphoenolpyruvate. 3-phosphoshikimate-binding residues include Ser-164, Gln-166, Asp-312, and Lys-339. Gln-166 provides a ligand contact to phosphoenolpyruvate. Catalysis depends on Asp-312, which acts as the Proton acceptor. The phosphoenolpyruvate site is built by Arg-343 and Arg-386.

It belongs to the EPSP synthase family. Monomer.

The protein resides in the cytoplasm. The catalysed reaction is 3-phosphoshikimate + phosphoenolpyruvate = 5-O-(1-carboxyvinyl)-3-phosphoshikimate + phosphate. It functions in the pathway metabolic intermediate biosynthesis; chorismate biosynthesis; chorismate from D-erythrose 4-phosphate and phosphoenolpyruvate: step 6/7. Catalyzes the transfer of the enolpyruvyl moiety of phosphoenolpyruvate (PEP) to the 5-hydroxyl of shikimate-3-phosphate (S3P) to produce enolpyruvyl shikimate-3-phosphate and inorganic phosphate. This Bacillus subtilis (strain 168) protein is 3-phosphoshikimate 1-carboxyvinyltransferase.